A 143-amino-acid polypeptide reads, in one-letter code: Large ribosomal subunit protein uL11 (143 aa).

It belongs to the universal ribosomal protein uL11 family. In terms of assembly, part of the ribosomal stalk of the 50S ribosomal subunit. Interacts with L10 and the large rRNA to form the base of the stalk. L10 forms an elongated spine to which 2 L12 dimers bind in a sequential fashion forming a pentameric L10(L12)2(L12)2 complex. Post-translationally, one or more lysine residues are methylated.

Its function is as follows. Forms part of the ribosomal stalk which helps the ribosome interact with GTP-bound translation factors. This Agrobacterium fabrum (strain C58 / ATCC 33970) (Agrobacterium tumefaciens (strain C58)) protein is Large ribosomal subunit protein uL11.